Here is a 218-residue protein sequence, read N- to C-terminus: Large ribosomal subunit protein uL3 (218 aa).

The disordered stretch occupies residues 132–152; that stretch reads FKGQGASHGTQAVHRRPGSIG.

This sequence belongs to the universal ribosomal protein uL3 family. Part of the 50S ribosomal subunit. Forms a cluster with proteins L14 and L19.

Its function is as follows. One of the primary rRNA binding proteins, it binds directly near the 3'-end of the 23S rRNA, where it nucleates assembly of the 50S subunit. This Rhodococcus erythropolis (strain PR4 / NBRC 100887) protein is Large ribosomal subunit protein uL3.